Reading from the N-terminus, the 1190-residue chain is Pumilio homolog 1 (1190 aa).

4 disordered regions span residues 38-74 (LTSGPVGQQQPPQPPTHSALATGPHASPVGGSMGVAG), 491-531 (SNSA…QQTD), 611-675 (ANGP…NSSL), and 744-777 (GPVGMPLPSQGPSHSQTPPPSLSSHGSSTSLNLG). Low complexity-rich tracts occupy residues 491–508 (SNSASQQNNPQSQQGQQQ), 518–531 (PLTPNQNQQGQQTD), 628–675 (QQPQ…NSSL), and 765–777 (LSSHGSSTSLNLG). A PUM-HD domain is found at 830-1172 (GRSRLLEDFR…HILAKLEKYY (343 aa)). 8 Pumilio repeats span residues 850 to 885 (EIAGHIMEFSQDQHGSRFIQLKLERATPAERQLVFN), 886 to 921 (EILQAAYQLMVDVFGNYVIQKFFEFGSLEQKLALAE), 922 to 959 (RIRGHVLSLALQMYGCRVIQKALEFIPPDQQVINEMVR), 960 to 995 (ELDGHVLKCVKDQNGNHVVQKCIECVQPQSLQFIID), 996 to 1031 (AFKSQVFALSTHPYGCRVIQRILEHCLPEQTLPILE), 1032 to 1067 (ELHQHTEQLVQDQYGNYVIQHVLEHGRPEDKSKIVA), 1068 to 1103 (EIRGNVLVLSQHKFASNVVEKCVTHASRTERAMLID), and 1107 to 1146 (TMNDGPHSALYTMMKDQYANYVVQKMIDVAEPAQRKIVMH). Residues 865–869 (SRFIQ) are adenine-nucleotide binding in RNA target. Residues 901–905 (NYVIQ) form a uracil-nucleotide binding in RNA target region. The segment at 937–941 (CRVIQ) is adenine-nucleotide binding in RNA target. The tract at residues 975–979 (NHVVQ) is non-specific-nucleotide binding in RNA target. The interval 1011–1015 (CRVIQ) is adenine-nucleotide binding in RNA target. Positions 1047 to 1051 (NYVIQ) are uracil-nucleotide binding in RNA target. The interval 1083–1087 (SNVVE) is guanine-nucleotide binding in RNA target. Positions 1126-1130 (NYVVQ) are uracil-nucleotide binding in RNA target.

Interacts with cpeb1-a; interacts with unphosphorylated cpeb1-a but not phosphorylated. Component of a complex with papd4, sympk, tacc3, parn, dazl and cpeb1. Post-translationally, phosphorylated. Phosphorylation takes place at the time of dissociation of cpeb1-a from pum1 and the translational activation of ccnb1 mRNA. Present in oocytes (at protein level).

The protein localises to the cytoplasm. The protein resides in the P-body. It is found in the cytoplasmic granule. Sequence-specific RNA-binding protein that acts as a post-transcriptional repressor by binding the 3'-UTR of mRNA targets. Binds to an RNA consensus sequence, the Pumilio Response Element (PRE), 5'-UGUANAUA-3', that is related to the Nanos Response Element (NRE). Mediates post-transcriptional repression of transcripts via different mechanisms: acts via direct recruitment of deadenylase complexes leading to translational inhibition and mRNA degradation. Also mediates deadenylation-independent repression by promoting accessibility of miRNAs. Acts as a post-transcriptional repressor of ccnb1 mRNA during oocyte maturation. This chain is Pumilio homolog 1, found in Xenopus laevis (African clawed frog).